The following is a 402-amino-acid chain: Multidrug resistance protein MdtH (402 aa).

11 helical membrane-spanning segments follow: residues 13 to 33, 34 to 54, 99 to 116, 139 to 159, 165 to 185, 214 to 234, 243 to 263, 277 to 297, 300 to 320, 340 to 360, and 368 to 388; these read YFLL…FPLI, SIRF…ALGL, PWLL…GTLF, LLMM…SWLL, LVCA…AWLL, VLTL…LPIM, AAVK…LYPI, LMAG…VSSV, LFVL…ARET, LGLA…FDSG, and LPWV…WWQF.

The protein belongs to the major facilitator superfamily. DHA1 family. MdtH (TC 2.A.1.2.21) subfamily.

Its subcellular location is the cell inner membrane. The protein is Multidrug resistance protein MdtH of Enterobacter sp. (strain 638).